The sequence spans 137 residues: MQATETKDRAVYWGTGRRKTSVARVRLIPGTGQVTVNGKPGDTYFNRIADYLQGIKAPLETLGLENEYDILVKAHGGGLTGQADAVKLGVARALCELAPENRQPLKSEGYLTRDPRAKERKKYGLHKARKAPQYSKR.

Positions 104–137 are disordered; the sequence is PLKSEGYLTRDPRAKERKKYGLHKARKAPQYSKR. Positions 118 to 137 are enriched in basic residues; it reads KERKKYGLHKARKAPQYSKR.

It belongs to the universal ribosomal protein uS9 family.

The chain is Small ribosomal subunit protein uS9 from Gloeothece citriformis (strain PCC 7424) (Cyanothece sp. (strain PCC 7424)).